A 1228-amino-acid chain; its full sequence is Minor fimbrium subunit Mfa5 (1228 aa).

Residues 1 to 25 form the signal peptide; the sequence is MMKRYTIILAVFLLFCTVFTFQIKA. The region spanning 144-267 is the VWFA domain; that stretch reads DVVMVIDQSS…QYPVKNVTTA (124 aa).

As to quaternary structure, minor fimbriae are composed of a structural subunit, most often Mfa1, and the accessory subunits Mfa3, Mfa4 and Mfa5. Fimbrium assembly occurs by linear, head-to-tail oligomerization of fimbrial subunits. This is mediated via insertion of a C-terminal beta-strand from one subunit into a groove in the N-terminal domain of the following subunit.

It localises to the fimbrium. In terms of biological role, accessory subunit of the minor fimbriae. These filamentous pili are attached to the cell surface; they mediate biofilm formation, adhesion onto host cells and onto other bacteria that are part of the oral microbiome. They play an important role in invasion of periodontal tissues and are recognized as major virulence factors. Fimbrium subunits from different strains have highly divergent sequences, and this correlates with pathogenicity. This Porphyromonas gingivalis (strain ATCC 33277 / DSM 20709 / CIP 103683 / JCM 12257 / NCTC 11834 / 2561) protein is Minor fimbrium subunit Mfa5.